The sequence spans 305 residues: Mat- sexual cell fertilization-promoting factor (305 aa).

A DNA-binding region (alpha box) is located at residues 38 to 93 (PAKKKVNGFMGYRSYYSSMFSQLPQKERSPILTTLWQQDPFHKEWDFMCAVYSAIR).

The protein belongs to the MATALPHA1 family.

It is found in the nucleus. In terms of biological role, controls fertilization, probably by determining the mating type. May be involved in the post-fertilization steps of the sexual cycle besides mat+. It is required for the developmental events that occur in the female organ after fertilization. The chain is Mat- sexual cell fertilization-promoting factor (FMR1) from Podospora anserina (Pleurage anserina).